The sequence spans 184 residues: MGISDQINSNLSSQSPFTVSTNPSDSMFLPTNRIAKTADWKEEKKYYYPKESIQSIYEGTTVRIVIDKQNGRLYGLEMVVEIGPLTANGATFTRLCRDVAHSMAYSVSIWNGNNEIHRLHMDHERIEMVLTKLKHERDMEDKMAGYYDDATRTALGATKQKLIFDLNFFHTVHTSDALYLNAWH.

The segment at 1 to 24 (MGISDQINSNLSSQSPFTVSTNPS) is disordered.

This is an uncharacterized protein from Dictyostelium discoideum (Social amoeba).